The sequence spans 179 residues: ATP synthase subunit b, chloroplastic (179 aa).

Residues 28 to 46 (IINIAALVGILIYAGRDFL) traverse the membrane as a helical segment.

It belongs to the ATPase B chain family. F-type ATPases have 2 components, F(1) - the catalytic core - and F(0) - the membrane proton channel. F(1) has five subunits: alpha(3), beta(3), gamma(1), delta(1), epsilon(1). F(0) has four main subunits: a(1), b(1), b'(1) and c(10-14). The alpha and beta chains form an alternating ring which encloses part of the gamma chain. F(1) is attached to F(0) by a central stalk formed by the gamma and epsilon chains, while a peripheral stalk is formed by the delta, b and b' chains.

It is found in the plastid. Its subcellular location is the chloroplast thylakoid membrane. Its function is as follows. F(1)F(0) ATP synthase produces ATP from ADP in the presence of a proton or sodium gradient. F-type ATPases consist of two structural domains, F(1) containing the extramembraneous catalytic core and F(0) containing the membrane proton channel, linked together by a central stalk and a peripheral stalk. During catalysis, ATP synthesis in the catalytic domain of F(1) is coupled via a rotary mechanism of the central stalk subunits to proton translocation. In terms of biological role, component of the F(0) channel, it forms part of the peripheral stalk, linking F(1) to F(0). In Trieres chinensis (Marine centric diatom), this protein is ATP synthase subunit b, chloroplastic.